Reading from the N-terminus, the 120-residue chain is Cytochrome c-550 (120 aa).

The helical transmembrane segment at 5–25 (PLIPFLLIAVLGIGLTFFLSV) threads the bilayer. At 26–120 (KGLDDSREIA…DMAEWVSKIK (95 aa)) the chain is on the periplasmic side. The heme c site is built by cysteine 60, cysteine 63, histidine 64, and methionine 99.

Post-translationally, binds 1 heme c group covalently per subunit.

The protein localises to the cell membrane. In terms of biological role, not essential for growth on minimal or rich media. The polypeptide is Cytochrome c-550 (cccA) (Bacillus subtilis (strain 168)).